The chain runs to 170 residues: Adenine phosphoribosyltransferase (170 aa).

Belongs to the purine/pyrimidine phosphoribosyltransferase family. Homodimer.

It localises to the cytoplasm. It catalyses the reaction AMP + diphosphate = 5-phospho-alpha-D-ribose 1-diphosphate + adenine. It functions in the pathway purine metabolism; AMP biosynthesis via salvage pathway; AMP from adenine: step 1/1. Functionally, catalyzes a salvage reaction resulting in the formation of AMP, that is energically less costly than de novo synthesis. The chain is Adenine phosphoribosyltransferase from Streptococcus sanguinis (strain SK36).